Consider the following 280-residue polypeptide: F420-dependent methylenetetrahydromethanopterin dehydrogenase (280 aa).

The protein belongs to the MTD family.

The catalysed reaction is 5,10-methylenetetrahydromethanopterin + oxidized coenzyme F420-(gamma-L-Glu)(n) + 2 H(+) = 5,10-methenyl-5,6,7,8-tetrahydromethanopterin + reduced coenzyme F420-(gamma-L-Glu)(n). The protein operates within one-carbon metabolism; methanogenesis from CO(2); 5,10-methylene-5,6,7,8-tetrahydromethanopterin from 5,10-methenyl-5,6,7,8-tetrahydromethanopterin (coenzyme F420 route): step 1/1. Functionally, catalyzes the reversible reduction of methenyl-H(4)MPT(+) to methylene-H(4)MPT. The polypeptide is F420-dependent methylenetetrahydromethanopterin dehydrogenase (Methanoculleus marisnigri (strain ATCC 35101 / DSM 1498 / JR1)).